The primary structure comprises 248 residues: Transcription factor cicD (248 aa).

The segment covering Met1 to Val22 has biased composition (basic and acidic residues). Residues Met1–Gly25 form a disordered region. An HTH myb-type domain is found at Asp19–Gly74. Residues Trp46–Ser70 constitute a DNA-binding region (H-T-H motif). Residues Ser186–Asp208 are disordered.

It is found in the nucleus. Functionally, transcription factor that regulates the expression of the gene cluster that mediates the biosynthesis of cichorine, a phytotoxin active against knapweed, corn, and soybeans. This Emericella nidulans (strain FGSC A4 / ATCC 38163 / CBS 112.46 / NRRL 194 / M139) (Aspergillus nidulans) protein is Transcription factor cicD.